We begin with the raw amino-acid sequence, 264 residues long: MLSHSAMVKQRKQQASAITKEIHGHDVDGMDLGKKVSIPRDIMIEELSHFSNRGARLFKMRQRRSDKYTFENFQYESRAQINHNIAMQNGRVDGSNLEGGSQQGPSTPPNTPDPRSPPNPENIAPGYSGPLKEIPPERFNTTAVPKYYRSPWEQAIGSDPELLEALYPKLFKPEGKAELRDYRSFNRVATPFGGFEKASKMVKFKVPDFELLLLTDPRFLAFANPLSGRRCFNRAPKGWVSENIPVVITTEPTEDATVPESDDL.

An Omega-N-methylarginine modification is found at arginine 53. The tract at residues 90–135 (GRVDGSNLEGGSQQGPSTPPNTPDPRSPPNPENIAPGYSGPLKEIP) is disordered. Phosphoserine is present on serine 101. The span at 106–120 (STPPNTPDPRSPPNP) shows a compositional bias: pro residues. A phosphothreonine mark is found at threonine 107 and threonine 111. Residue serine 116 is modified to Phosphoserine.

This sequence belongs to the myozenin family. As to quaternary structure, interacts via its C-terminus with spectrin repeats 3 and 4 of ACTN2. Interacts with ACTN1, LDB3, MYOT and PPP3CA. As to expression, expressed specifically in heart and skeletal muscle. In skeletal muscle, localized to the soleus and plantaris muscles, which are predominantly composed of slow-twitch fibers.

It is found in the cytoplasm. Its subcellular location is the myofibril. The protein resides in the sarcomere. It localises to the z line. In terms of biological role, myozenins may serve as intracellular binding proteins involved in linking Z line proteins such as alpha-actinin, gamma-filamin, TCAP/telethonin, LDB3/ZASP and localizing calcineurin signaling to the sarcomere. Plays an important role in the modulation of calcineurin signaling. May play a role in myofibrillogenesis. In Mus musculus (Mouse), this protein is Myozenin-2.